Consider the following 94-residue polypeptide: Adaptation to cold protein J (94 aa).

A J domain is found at 3-93 (NHFSVLGIKP…AMRELWDQFY (91 aa)). The tract at residues 74 to 94 (NNVIVTDPNSAMRELWDQFYP) is essential for interaction with AtcC.

As to quaternary structure, interacts via its C-terminal extension with AtcC. Does not interact with AtcA and AtcB.

Involved in cold adaptation. The J-domain is functional and can stimulate the ATPase activity of the DnaK chaperone. May work as a co-chaperone of the DnaK system to support cold resistance. This chain is Adaptation to cold protein J, found in Shewanella oneidensis (strain ATCC 700550 / JCM 31522 / CIP 106686 / LMG 19005 / NCIMB 14063 / MR-1).